We begin with the raw amino-acid sequence, 159 residues long: Ribosomal RNA large subunit methyltransferase H (159 aa).

S-adenosyl-L-methionine-binding positions include isoleucine 75, glycine 108, and 127 to 132 (FGRMTL).

Belongs to the RNA methyltransferase RlmH family. Homodimer.

The protein localises to the cytoplasm. It carries out the reaction pseudouridine(1915) in 23S rRNA + S-adenosyl-L-methionine = N(3)-methylpseudouridine(1915) in 23S rRNA + S-adenosyl-L-homocysteine + H(+). Specifically methylates the pseudouridine at position 1915 (m3Psi1915) in 23S rRNA. The sequence is that of Ribosomal RNA large subunit methyltransferase H from Lactococcus lactis subsp. lactis (strain IL1403) (Streptococcus lactis).